The chain runs to 93 residues: Co-chaperonin GroES (93 aa).

Belongs to the GroES chaperonin family. Heptamer of 7 subunits arranged in a ring. Interacts with the chaperonin GroEL.

It localises to the cytoplasm. Functionally, together with the chaperonin GroEL, plays an essential role in assisting protein folding. The GroEL-GroES system forms a nano-cage that allows encapsulation of the non-native substrate proteins and provides a physical environment optimized to promote and accelerate protein folding. GroES binds to the apical surface of the GroEL ring, thereby capping the opening of the GroEL channel. The chain is Co-chaperonin GroES from Streptococcus gordonii.